Reading from the N-terminus, the 120-residue chain is NAD(P)H-quinone oxidoreductase subunit 3, chloroplastic (120 aa).

Transmembrane regions (helical) follow at residues 9-29 (IFWA…LISG), 64-84 (MFAL…PWAM), and 88-108 (VLGV…ILGL).

This sequence belongs to the complex I subunit 3 family. NDH is composed of at least 16 different subunits, 5 of which are encoded in the nucleus.

It localises to the plastid. The protein resides in the chloroplast thylakoid membrane. The catalysed reaction is a plastoquinone + NADH + (n+1) H(+)(in) = a plastoquinol + NAD(+) + n H(+)(out). It carries out the reaction a plastoquinone + NADPH + (n+1) H(+)(in) = a plastoquinol + NADP(+) + n H(+)(out). In terms of biological role, NDH shuttles electrons from NAD(P)H:plastoquinone, via FMN and iron-sulfur (Fe-S) centers, to quinones in the photosynthetic chain and possibly in a chloroplast respiratory chain. The immediate electron acceptor for the enzyme in this species is believed to be plastoquinone. Couples the redox reaction to proton translocation, and thus conserves the redox energy in a proton gradient. This chain is NAD(P)H-quinone oxidoreductase subunit 3, chloroplastic, found in Aethionema grandiflorum (Persian stone-cress).